Reading from the N-terminus, the 296-residue chain is NADH-cytochrome b5 reductase 1 (296 aa).

A helical transmembrane segment spans residues 11–31; the sequence is LSAVLVKFAPFAVAVIAILAA. The region spanning 47–152 is the FAD-binding FR-type domain; sequence SEFQNFVLKE…RGPKGAMVYT (106 aa). Residues 132 to 147 and 158 to 195 each bind FAD; these read TTLK…GPKG and HIGM…KIDL.

It belongs to the flavoprotein pyridine nucleotide cytochrome reductase family. In terms of assembly, monomer. Component of the 2-(3-amino-3-carboxypropyl)histidine synthase complex composed of dph1, dph2, dph3 and a NADH-dependent reductase, predominantly cbr1. The cofactor is FAD.

The protein resides in the mitochondrion outer membrane. It carries out the reaction 2 Fe(III)-[cytochrome b5] + NADH = 2 Fe(II)-[cytochrome b5] + NAD(+) + H(+). It catalyses the reaction 2 Fe(3+)-[Dph3] + NADH = 2 Fe(2+)-[Dph3] + NAD(+) + H(+). Its pathway is protein modification; peptidyl-diphthamide biosynthesis. Its function is as follows. NADH-dependent reductase for dph3 and cytochrome b5. Required for the first step of diphthamide biosynthesis, a post-translational modification of histidine which occurs in elongation factor 2. Dph1 and dph2 transfer a 3-amino-3-carboxypropyl (ACP) group from S-adenosyl-L-methionine (SAM) to a histidine residue, the reaction is assisted by a reduction system comprising dph3 and a NADH-dependent reductase, predominantly cbr1. By reducing dph3, also involved in the formation of the tRNA wobble base modification mcm5s 2U (5-methoxycarbonylmethyl-2-thiouridine), mediated by the elongator complex. The cytochrome b5/NADH cytochrome b5 reductase electron transfer system supports the catalytic activity of several sterol biosynthetic enzymes. The polypeptide is NADH-cytochrome b5 reductase 1 (cbr1) (Aspergillus terreus (strain NIH 2624 / FGSC A1156)).